A 190-amino-acid polypeptide reads, in one-letter code: Inosine triphosphate pyrophosphatase (190 aa).

An ITP-binding site is contributed by 9 to 14; it reads TGNAKK. E39 provides a ligand contact to Mg(2+). ITP contacts are provided by residues K51, 67–68, K84, 144–147, K167, and 172–173; these read DT, FGWD, and HR.

The protein belongs to the HAM1 NTPase family. Homodimer. Requires Mg(2+) as cofactor. Mn(2+) serves as cofactor.

Its subcellular location is the cytoplasm. It carries out the reaction ITP + H2O = IMP + diphosphate + H(+). It catalyses the reaction dITP + H2O = dIMP + diphosphate + H(+). The catalysed reaction is XTP + H2O = XMP + diphosphate + H(+). Pyrophosphatase that hydrolyzes non-canonical purine nucleotides such as inosine triphosphate (ITP), deoxyinosine triphosphate (dITP) or xanthosine 5'-triphosphate (XTP) to their respective monophosphate derivatives. The enzyme does not distinguish between the deoxy- and ribose forms. Probably excludes non-canonical purines from RNA and DNA precursor pools, thus preventing their incorporation into RNA and DNA and avoiding chromosomal lesions. This chain is Inosine triphosphate pyrophosphatase, found in Pediculus humanus subsp. corporis (Body louse).